Consider the following 374-residue polypeptide: Isopentenyl-diphosphate delta-isomerase (374 aa).

Position 13-14 (13-14 (RK)) interacts with substrate. Residues 71–73 (GMT), serine 104, and asparagine 132 contribute to the FMN site. 104 to 106 (SQR) contacts substrate. Glutamine 171 provides a ligand contact to substrate. Glutamate 172 lines the Mg(2+) pocket. FMN contacts are provided by residues lysine 203, threonine 233, 282–284 (GMR), and 303–304 (AL).

This sequence belongs to the IPP isomerase type 2 family. In terms of assembly, homooctamer. Dimer of tetramers. It depends on FMN as a cofactor. Requires NADPH as cofactor. The cofactor is Mg(2+).

Its subcellular location is the cytoplasm. It catalyses the reaction isopentenyl diphosphate = dimethylallyl diphosphate. In terms of biological role, involved in the biosynthesis of isoprenoids. Catalyzes the 1,3-allylic rearrangement of the homoallylic substrate isopentenyl (IPP) to its allylic isomer, dimethylallyl diphosphate (DMAPP). The chain is Isopentenyl-diphosphate delta-isomerase from Thermococcus kodakarensis (strain ATCC BAA-918 / JCM 12380 / KOD1) (Pyrococcus kodakaraensis (strain KOD1)).